Here is a 141-residue protein sequence, read N- to C-terminus: Calcitonin (141 aa).

Positions 1–25 (MGFQKFSPFLALSILVLLQAGSLHA) are cleaved as a signal peptide. Residues 26–82 (APFRSALESSPADPATLSEDEARLLLAALVQDYVQMKASELEQEQEREGSSLDSPRS) constitute a propeptide that is removed on maturation. Serine 43 carries the phosphoserine modification. 2 disordered regions span residues 64-85 (SELE…SKRC) and 111-141 (IGVG…QNAN). Cysteine 85 and cysteine 91 are joined by a disulfide. Proline 116 is modified (proline amide). Residues 118–132 (KKRDMSSDLERDHRP) are compositionally biased toward basic and acidic residues.

Belongs to the calcitonin family.

It localises to the secreted. Its function is as follows. Calcitonin is a peptide hormone that causes a rapid but short-lived drop in the level of calcium and phosphate in blood by promoting the incorporation of those ions in the bones. Calcitonin function is mediated by the calcitonin receptor/CALCR and the CALCR-RAMP2 (AMYR2) receptor complex. In terms of biological role, katacalcin is a potent plasma calcium-lowering peptide. This chain is Calcitonin, found in Homo sapiens (Human).